A 562-amino-acid polypeptide reads, in one-letter code: Protein FAM83D-B (562 aa).

The tract at residues 424-472 (ITTQTTETSQCTTQTPAPTSSVARLSNSSNSSSSSFSSASTTSTGSNCS) is disordered. Positions 425-472 (TTQTTETSQCTTQTPAPTSSVARLSNSSNSSSSSFSSASTTSTGSNCS) are enriched in low complexity.

Belongs to the FAM83 family.

The protein resides in the cytoplasm. It is found in the cytoskeleton. The protein localises to the spindle. Its subcellular location is the spindle pole. In terms of biological role, may regulate cell proliferation, growth, migration and epithelial to mesenchymal transition. May also be important for proper chromosome congression and alignment during mitosis. The sequence is that of Protein FAM83D-B from Xenopus laevis (African clawed frog).